Consider the following 362-residue polypeptide: 3-isopropylmalate dehydrogenase (362 aa).

An NAD(+)-binding site is contributed by 78–91 (GPKWETLPPDEQPE). Residues Arg-99, Arg-109, Arg-138, and Asp-227 each coordinate substrate. The Mg(2+) site is built by Asp-227, Asp-251, and Asp-255. 285–297 (GSAPDIAGQGIAN) lines the NAD(+) pocket.

Belongs to the isocitrate and isopropylmalate dehydrogenases family. LeuB type 1 subfamily. As to quaternary structure, homodimer. Mg(2+) serves as cofactor. Requires Mn(2+) as cofactor.

The protein localises to the cytoplasm. The catalysed reaction is (2R,3S)-3-isopropylmalate + NAD(+) = 4-methyl-2-oxopentanoate + CO2 + NADH. It participates in amino-acid biosynthesis; L-leucine biosynthesis; L-leucine from 3-methyl-2-oxobutanoate: step 3/4. Catalyzes the oxidation of 3-carboxy-2-hydroxy-4-methylpentanoate (3-isopropylmalate) to 3-carboxy-4-methyl-2-oxopentanoate. The product decarboxylates to 4-methyl-2 oxopentanoate. This is 3-isopropylmalate dehydrogenase from Geobacter metallireducens (strain ATCC 53774 / DSM 7210 / GS-15).